The sequence spans 87 residues: Signal recognition particle 19 kDa protein (87 aa).

Belongs to the SRP19 family. In terms of assembly, part of the signal recognition particle protein translocation system, which is composed of SRP and FtsY. Archaeal SRP consists of a 7S RNA molecule of 300 nucleotides and two protein subunits: SRP54 and SRP19.

It localises to the cytoplasm. Its function is as follows. Involved in targeting and insertion of nascent membrane proteins into the cytoplasmic membrane. Binds directly to 7S RNA and mediates binding of the 54 kDa subunit of the SRP. The sequence is that of Signal recognition particle 19 kDa protein from Methanocaldococcus jannaschii (strain ATCC 43067 / DSM 2661 / JAL-1 / JCM 10045 / NBRC 100440) (Methanococcus jannaschii).